Consider the following 451-residue polypeptide: COBRA-like protein 6 (451 aa).

A signal peptide spans 1–21 (MAVLGSLLLLILAATLSVAVA). N-linked (GlcNAc...) asparagine glycans are attached at residues asparagine 30, asparagine 155, asparagine 163, asparagine 202, asparagine 227, asparagine 323, asparagine 338, and asparagine 357. Asparagine 426 carries the GPI-anchor amidated asparagine lipid modification. The propeptide at 427 to 451 (AAPPAAASLVGSAVAMAALVFFLMA) is removed in mature form.

It belongs to the COBRA family.

It localises to the cell membrane. Involved in determining the orientation of cell expansion, probably by playing an important role in cellulose deposition. May act by recruiting cellulose synthesizing complexes to discrete positions on the cell surface. The sequence is that of COBRA-like protein 6 (BC1L7) from Oryza sativa subsp. japonica (Rice).